We begin with the raw amino-acid sequence, 168 residues long: Protein-export protein SecB (168 aa).

Residues 1 to 20 form a disordered region; sequence MTDETAANGENEAGRQSQSS.

The protein belongs to the SecB family. Homotetramer, a dimer of dimers. One homotetramer interacts with 1 SecA dimer.

It is found in the cytoplasm. Functionally, one of the proteins required for the normal export of preproteins out of the cell cytoplasm. It is a molecular chaperone that binds to a subset of precursor proteins, maintaining them in a translocation-competent state. It also specifically binds to its receptor SecA. This Rhodospirillum centenum (strain ATCC 51521 / SW) protein is Protein-export protein SecB.